The following is a 346-amino-acid chain: High mobility group protein 20A (346 aa).

2 stretches are compositionally biased toward polar residues: residues 1-10 and 55-65; these read MESLMASSTL and SQGQLLQSEAS. 2 disordered regions span residues 1 to 112 and 178 to 210; these read MESL…YVRF and FSRK…TEVK. The span at 71–81 shows a compositional bias: basic and acidic residues; sequence NEQRPEDEQRS. Residues 82–95 show a composition bias toward basic residues; it reads KRGGWSKGRKRKKP. Residues 102–170 constitute a DNA-binding region (HMG box); sequence PKSPLTGYVR…RYMKELEQYQ (69 aa). Serine 104 is modified (phosphoserine). The span at 181–210 shows a compositional bias: basic and acidic residues; it reads KTQDRQKGKSHRQDAARQATHDHEKETEVK. Positions 228–272 form a coiled coil; that stretch reads SKAREAELRQLRKSNMEFEERNAALQKHVESMRTAVEKLEVDVIQ.

As to quaternary structure, interacts with DTNB. Expressed in brain. Detected in mature neurons.

The protein localises to the nucleus. In terms of biological role, plays a role in neuronal differentiation as chromatin-associated protein. Acts as inhibitor of HMG20B. Overcomes the repressive effects of the neuronal silencer REST and induces the activation of neuronal-specific genes. Involved in the recruitment of the histone methyltransferase KMT2A/MLL1 and consequent increased methylation of histone H3 lysine 4. The protein is High mobility group protein 20A (Hmg20a) of Mus musculus (Mouse).